The chain runs to 700 residues: MPSDILVVAALGRPFTLGMLYDARNDKLIPGFTLWEDEVIEESTVESSQPSSAFEIIASDSIDDKSSLMDIEASLKASFLGGLVEVGGSAKYLNNQKKFKNQSRVTLQYKATTNFKQLMTNLGTKHVEYSELFENIQATHVVIGILYGANAFFVFDSNKVDSTNVQEIQGQMEAVIKKIPSVEISGKASVQLTSEETDITNSFSCEFHGDFFLTSNPTTFEDAVKTYQQLPQMMGKDNAVPMTVWLVPMVNFYSEAPQLMADSSTPILRKVRNTLEAIVQVQMRCNDALDDPTVNLFTEVQKKLSDFQIICDDHMSKLQATIAKKLFAIRSGDEDESALVNLFEENLQSPFNIESLNMWMEFEEREINVLKSCMDILTKAKPKVIFNQGVLFKELYDSKVKHGLCYVFTNVTKNDDFLTVLNDFLDSPQSRPKKLRPSPKDYWYSYDDIPEMMREKAHLFRNLAKEMNNRCVHFFVTAINNPKQEGAGIHYYRESIQIIHEFTKPHMPGVETIKDRRELQWYDCELTLDTETAHQVLTLSEGNKKAVSGSTKSPADHFEKFSHFQQVMCTKGLSGRHYWELEWSGHVSAGVTYKGISRKTSTPDSSLGKNQKSWVFEYTKKSGYQQIHNGKNARVTVSSIGFKQLGVYLDWPAGTLSFYMVNKAWVTHLHTFHTKFYEAVYPAFLIGDAQQKVNGQIKLL.

Residues 506-700 enclose the B30.2/SPRY domain; that stretch reads HMPGVETIKD…QKVNGQIKLL (195 aa).

This sequence belongs to the SNTX/VTX toxin family. As to quaternary structure, heterodimer of alpha and beta subunits. Post-translationally, not glycosylated. Four intrachain disulfide linkages are present in the heterodimer. No interchain disulfide bound links the two subunits. Expressed by the venom gland.

The protein localises to the secreted. In terms of biological role, has hemolytic and lethal activities. Its hemolytic activity is inhibited by anionic lipids, especially potently by cardiolipin. The sequence is that of Neoverrucotoxin subunit beta from Synanceia verrucosa (Reef stonefish).